We begin with the raw amino-acid sequence, 531 residues long: MRHRGLGLAALLALLAAVAPRSSAAAGAALWPMPLSVKTSPRLLHLSRDNFSIGYGPSSTAGPTCSLLQEAFRRYHEYIFGFDKRQRRPAKPNSAIELQQLLVTVVLDSECDLFPNITSDESYTLLVKEPVAFLKANRVWGVLRGLETFSQLIYQDSYGTFTVNESDIIDSPRFPHRGILIDTARHFLPVKSILKTLDAMAFNKFNVLHWHIVDDQSFPYQSVTFPELSNKGSYSLSHVYTPNDVHTVIEYARLRGIRVIPEFDSPGHTQSWGKGQKDLLTPCYNEHKQSGTFGPINPILNSTYNFLSQFFKEVSMVFPDHFVHLGGDEVEFQCWESNPEIQGFMKQKGFGKDFRRLESFYLQKLLGIVSTVKKGSIVWQEVFDDHVKLLPGTIVQVWKNQVYTEELREVTAAGFPVILSAPWYLDWISYGQDWRNYYKVDPLHFDGSQEQKKLVIGGEACLWGEFVDATNLTPRLWPRASAVGERLWSPEDITSVGNAYNRLTVHRCRMVRRGISAEPLFTGYCDYEYKT.

An N-terminal signal peptide occupies residues 1 to 24; that stretch reads MRHRGLGLAALLALLAAVAPRSSA. A glycan (N-linked (GlcNAc...) asparagine) is linked at Asn-50. The cysteines at positions 65 and 111 are disulfide-linked. Asn-116, Asn-164, and Asn-301 each carry an N-linked (GlcNAc...) asparagine glycan. 2 disulfides stabilise this stretch: Cys-283/Cys-334 and Cys-508/Cys-525. The active-site Proton donor is Glu-329.

It belongs to the glycosyl hydrolase 20 family. There are 3 forms of beta-hexosaminidase: hexosaminidase A is a heterodimer composed of one subunit alpha and one subunit beta (chain A and B); hexosaminidase B is a homodimer of two beta subunits (two chains A and B); hexosaminidase S is a homodimer of two alpha subunits. The composition of the dimer (isozyme A versus isozyme S) has a significant effect on the substrate specificity of the alpha subunit active site.

It localises to the lysosome. Its subcellular location is the cytoplasmic vesicle. The protein resides in the secretory vesicle. The protein localises to the cortical granule. It carries out the reaction Hydrolysis of terminal non-reducing N-acetyl-D-hexosamine residues in N-acetyl-beta-D-hexosaminides.. The enzyme catalyses N-acetyl-beta-D-galactosaminyl-(1-&gt;4)-beta-D-3-sulfogalactosyl-(1-&gt;4)-beta-D-glucosyl-(1&lt;-&gt;1')-ceramide + H2O = a beta-D-3-sulfogalactosyl-(1-&gt;4)-beta-D-glucosyl-(1&lt;-&gt;1')-ceramide + N-acetyl-beta-D-galactosamine. It catalyses the reaction a ganglioside GM2 (d18:1(4E)) + H2O = a ganglioside GM3 (d18:1(4E)) + N-acetyl-beta-D-galactosamine. The catalysed reaction is a ganglioside GM2 + H2O = a ganglioside GM3 + N-acetyl-beta-D-galactosamine. It carries out the reaction beta-D-GalNAc-(1-&gt;4)-alpha-L-IdoA-(1-&gt;3)-beta-D-GalNAc-4-sulfate-(1-&gt;4)-alpha-L-IdoA-(1-&gt;3)-D-GalNAc-4-sulfate + H2O = alpha-L-IdoA-(1-&gt;3)-beta-D-GalNAc-4-sulfate-(1-&gt;4)-alpha-L-IdoA-(1-&gt;3)-D-GalNAc-4-sulfate + N-acetyl-D-galactosamine. The enzyme catalyses N-acetyl-beta-D-6-sulfogalactosaminyl-(1-&gt;4)-alpha-L-iduronyl-(1-&gt;3)-N-acetyl-D-6-sulfogalactosamine + H2O = alpha-L-iduronyl-(1-&gt;3)-N-acetyl-D-6-sulfogalactosamine + N-acetyl-D-6-sulfogalactosamine. Addition of GM2A stimulates the hydrolysis of sulfated glycosphingolipid SM2 and the ganglioside GM2. In terms of biological role, hydrolyzes the non-reducing end N-acetyl-D-hexosamine and/or sulfated N-acetyl-D-hexosamine of glycoconjugates, such as the oligosaccharide moieties from proteins and neutral glycolipids, or from certain mucopolysaccharides. The isozyme B does not hydrolyze each of these substrates, however hydrolyzes efficiently neutral oligosaccharide. Only the isozyme A is responsible for the degradation of GM2 gangliosides in the presence of GM2A. During fertilization is responsible, at least in part, for the zona block to polyspermy. Present in the cortical granules of non-activated oocytes, is exocytosed during the cortical reaction in response to oocyte activation and inactivates the sperm galactosyltransferase-binding site, accounting for the block in sperm binding to the zona pellucida. In Felis catus (Cat), this protein is Beta-hexosaminidase subunit beta.